The sequence spans 187 residues: Superoxide dismutase [Cu-Zn] (187 aa).

Residues 1-23 form the signal peptide; it reads MMKMKTLLALAISGICAAGVANA. Residues histidine 80, histidine 82, and histidine 105 each contribute to the Cu cation site. A disulfide bridge links cysteine 87 with cysteine 183. Zn(2+) contacts are provided by histidine 105, histidine 114, histidine 123, and aspartate 126. Cu cation is bound at residue histidine 161.

The protein belongs to the Cu-Zn superoxide dismutase family. In terms of assembly, homodimer. Cu cation is required as a cofactor. Requires Zn(2+) as cofactor.

The protein localises to the periplasm. The catalysed reaction is 2 superoxide + 2 H(+) = H2O2 + O2. Its function is as follows. Destroys radicals which are normally produced within the cells and which are toxic to biological systems. May confer survival advantage by accelerating dismutation of superoxide of environmental origin to hydrogen peroxide, disruptive to the normal mucociliary clearance process in the host. The polypeptide is Superoxide dismutase [Cu-Zn] (sodC) (Haemophilus parainfluenzae).